A 128-amino-acid polypeptide reads, in one-letter code: MTMLISLPTAPSVPNYQSLERPLNFTMAAAAKVRELIQEENSADLALRVYIQGGGCSGFQYGFEFDENRADDDLVLETDGVVLLVDPLSLQYLLGAEVDYTESLTGAKFVIRNPNAKTTCGCGSSFSI.

Iron-sulfur cluster-binding residues include cysteine 56, cysteine 120, and cysteine 122.

This sequence belongs to the HesB/IscA family. In terms of assembly, homodimer. It depends on iron-sulfur cluster as a cofactor.

Its function is as follows. Required for insertion of 4Fe-4S clusters for at least IspG. In Xylella fastidiosa (strain M12), this protein is Iron-sulfur cluster insertion protein ErpA.